The primary structure comprises 483 residues: Teichuronic acid biosynthesis protein TuaB (483 aa).

11 helical membrane-spanning segments follow: residues 15 to 34 (TSIS…ALLG), 41 to 63 (EFGL…DMGF), 83 to 105 (WLNI…VIAG), 112 to 134 (LVFL…QYQY), 154 to 176 (VLSF…YVIS), 294 to 316 (LALV…ITAV), 321 to 343 (WLAA…LMNP), 356 to 378 (LAFY…AVQT), 382 to 404 (LTVA…WLLA), 411 to 433 (LSAY…IIAF), and 448 to 470 (MRLA…KAYP).

The protein belongs to the polysaccharide synthase family.

It is found in the cell membrane. The protein operates within cell wall biogenesis; teichuronic acid biosynthesis. Might be involved in the translocation of teichuronic acid repeating units from the inner to the outer surface of the membrane. This Bacillus subtilis (strain 168) protein is Teichuronic acid biosynthesis protein TuaB (tuaB).